Consider the following 633-residue polypeptide: NBPF family member NBPF3 (633 aa).

The segment at 15–52 is disordered; it reads RGPDVETSPFGAPRAASHGVGRHQELRDPTVPGPTSSA. The stretch at 127 to 186 forms a coiled coil; that stretch reads LRDERLLTEEKLAEELGQAEELRQYKVLVHSQERELTQLREKLQEGRDASRSLNQHLQAL. Olduvai domains lie at 221-313, 314-402, 405-460, 461-552, and 555-633; these read ENDD…CIIP, ENES…ATSP, SREL…LDLD, RMKK…PPCP, and NEVL…IFPH. A compositionally biased stretch (basic and acidic residues) spans 316-326; sequence ESDHEQEEEKG. The segment at 316-370 is disordered; that stretch reads ESDHEQEEEKGPVSPRNLQESEEEEAPQESWDEGDWTLSIPPDMSASYQSDRSTF. The segment covering 335–350 has biased composition (acidic residues); the sequence is ESEEEEAPQESWDEGD. Residues 463 to 484 are disordered; that stretch reads KKDQEEEEDQGPPCPRLSRELP.

This sequence belongs to the NBPF family. In terms of tissue distribution, expressed in testis and fetal heart, as well as in non small cell lung carcinoma and neuroblastoma cell line.

It localises to the cytoplasm. The chain is NBPF family member NBPF3 from Homo sapiens (Human).